A 437-amino-acid chain; its full sequence is MNIFQHDIQDVGQGNVVAILGSQWGDEGKGKIIDILSKHSDITCRFNGGSNAGHTISVNDKKYALHLLPCGILYENNICVLGNGMVVHVKSLIDEINSIGGNIIDRLYLSDKSHILFDIHQTIDSMQENKKLKEGKQIGTTKRGIGPCYSTKVSRVGIRLGSLKNFEHFKSLYVKLIDNLMELYNISDYNKEEELEAFYQYHLLLKDRIIDVISFMNNQLNEKKKILIEGANAAMLDIDFGTYPYVTSSCTTVGGIFSGLGINHKKLNLTVGVVKSYLTRVGCGPFMTELTNEIGDYLREKGYEYGTTTKRPRRCGWLDIPMLLYVKCINSIDIINLTKLDVLSGLKEISLCVGYRSKATGELLQKGCYPVDEDAPEHYEPVYEQFEGWEEDISNCESFEELPENARKYVLAIEKYVGSPIVWIGIGANRNNTIMKK.

GTP is bound by residues 25–31, 53–55, and lysine 62; these read GDEGKGK and GHT. The active-site Proton acceptor is the aspartate 26. Mg(2+) is bound by residues aspartate 26 and glycine 53. IMP is bound by residues 26–29 and 51–54; these read DEGK and NAGH. Histidine 54 serves as the catalytic Proton donor. Residues threonine 141, arginine 155, asparagine 232, and threonine 247 each coordinate IMP. GTP is bound at residue threonine 307. Residue 307 to 313 coordinates substrate; that stretch reads TTTKRPR. Arginine 311 contributes to the IMP binding site. GTP-binding positions include arginine 313, 339 to 341, and 425 to 427; these read KLD and GIG.

It belongs to the adenylosuccinate synthetase family. In terms of assembly, homodimer. Mg(2+) is required as a cofactor.

The protein resides in the cytoplasm. It catalyses the reaction IMP + L-aspartate + GTP = N(6)-(1,2-dicarboxyethyl)-AMP + GDP + phosphate + 2 H(+). The protein operates within purine metabolism; AMP biosynthesis via de novo pathway; AMP from IMP: step 1/2. Plays an important role in the salvage pathway for purine nucleotide biosynthesis. Catalyzes the first committed step in the biosynthesis of AMP from IMP. The sequence is that of Adenylosuccinate synthetase from Plasmodium vivax (strain Salvador I).